We begin with the raw amino-acid sequence, 397 residues long: Riboflavin biosynthesis protein RibBA (397 aa).

Positions 1–199 are DHBP synthase; it reads MFHRIEEALE…IEDLIAYRRH (199 aa). D-ribulose 5-phosphate contacts are provided by residues 26 to 27, aspartate 31, 138 to 142, and glutamate 162; these read RE and RAGHT. Residue glutamate 27 participates in Mg(2+) binding. Position 141 (histidine 141) interacts with Mg(2+). The segment at 200–397 is GTP cyclohydrolase II; sequence HETLVTREAE…VNKLGHLLNL (198 aa). Residue 250 to 254 participates in GTP binding; sequence RVHSE. Residues cysteine 255, cysteine 266, and cysteine 268 each coordinate Zn(2+). GTP-binding positions include glutamine 271, 293–295, and threonine 315; that span reads EGR. The active-site Proton acceptor; for GTP cyclohydrolase activity is aspartate 327. Arginine 329 functions as the Nucleophile; for GTP cyclohydrolase activity in the catalytic mechanism. 2 residues coordinate GTP: threonine 350 and lysine 355.

It in the N-terminal section; belongs to the DHBP synthase family. In the C-terminal section; belongs to the GTP cyclohydrolase II family. The cofactor is Mg(2+). Mn(2+) is required as a cofactor. It depends on Zn(2+) as a cofactor.

The catalysed reaction is D-ribulose 5-phosphate = (2S)-2-hydroxy-3-oxobutyl phosphate + formate + H(+). It carries out the reaction GTP + 4 H2O = 2,5-diamino-6-hydroxy-4-(5-phosphoribosylamino)-pyrimidine + formate + 2 phosphate + 3 H(+). It functions in the pathway cofactor biosynthesis; riboflavin biosynthesis; 2-hydroxy-3-oxobutyl phosphate from D-ribulose 5-phosphate: step 1/1. Its pathway is cofactor biosynthesis; riboflavin biosynthesis; 5-amino-6-(D-ribitylamino)uracil from GTP: step 1/4. Catalyzes the conversion of D-ribulose 5-phosphate to formate and 3,4-dihydroxy-2-butanone 4-phosphate. Its function is as follows. Catalyzes the conversion of GTP to 2,5-diamino-6-ribosylamino-4(3H)-pyrimidinone 5'-phosphate (DARP), formate and pyrophosphate. The protein is Riboflavin biosynthesis protein RibBA of Bacillus cereus (strain ATCC 14579 / DSM 31 / CCUG 7414 / JCM 2152 / NBRC 15305 / NCIMB 9373 / NCTC 2599 / NRRL B-3711).